Here is a 133-residue protein sequence, read N- to C-terminus: Small ribosomal subunit protein uS8 (133 aa).

It belongs to the universal ribosomal protein uS8 family. In terms of assembly, part of the 30S ribosomal subunit. Contacts proteins S5 and S12.

In terms of biological role, one of the primary rRNA binding proteins, it binds directly to 16S rRNA central domain where it helps coordinate assembly of the platform of the 30S subunit. The sequence is that of Small ribosomal subunit protein uS8 from Mycoplasmoides gallisepticum (strain R(low / passage 15 / clone 2)) (Mycoplasma gallisepticum).